Consider the following 187-residue polypeptide: UPF0340 protein SGO_0411 (187 aa).

This sequence belongs to the UPF0340 family.

The protein is UPF0340 protein SGO_0411 of Streptococcus gordonii (strain Challis / ATCC 35105 / BCRC 15272 / CH1 / DL1 / V288).